The following is a 72-amino-acid chain: MKLTCVLIVAVLFLTACQLTTAASYARSEREHPDLGSSDQNSKLTKRCLASGETCWRDTSCCSFSCTNNVCF.

The N-terminal stretch at 1-22 (MKLTCVLIVAVLFLTACQLTTA) is a signal peptide. A propeptide spanning residues 23–45 (ASYARSEREHPDLGSSDQNSKLT) is cleaved from the precursor. Residues 25-44 (YARSEREHPDLGSSDQNSKL) form a disordered region. Cystine bridges form between Cys-48–Cys-62, Cys-55–Cys-66, and Cys-61–Cys-71.

Belongs to the conotoxin O1 superfamily. Expressed by the venom duct.

Its subcellular location is the secreted. The sequence is that of Conotoxin VnMKLT2-021 from Conus ventricosus (Mediterranean cone).